The primary structure comprises 134 residues: MSRDTIAEVLTVIRNANMDGKKTVKIPSSNITENIIKLLLREGFLENVRKHYENGNYFLVLTLRHQKTKKGTFTNILNLKKISRPGRRIYSTSKKIPRILGGIGIVILSTSHGILTDREARLEGIGGEILCYIW.

This sequence belongs to the universal ribosomal protein uS8 family. Part of the 30S ribosomal subunit.

The protein resides in the plastid. Its function is as follows. One of the primary rRNA binding proteins, it binds directly to 16S rRNA central domain where it helps coordinate assembly of the platform of the 30S subunit. The sequence is that of Small ribosomal subunit protein uS8c (rps8) from Cuscuta obtusiflora (Peruvian dodder).